The chain runs to 378 residues: Metacaspase-1B (378 aa).

The interval 1 to 70 (MCSPPPYPPQ…QEAQSFGGGA (70 aa)) is disordered. Residues 10 to 29 (QGHHYPPSPHGSYYSPTPYG) show a composition bias toward low complexity. Catalysis depends on residues His-169 and Cys-225.

This sequence belongs to the peptidase C14B family.

Functionally, involved in cell death (apoptosis). In Aspergillus terreus (strain NIH 2624 / FGSC A1156), this protein is Metacaspase-1B (casB).